The primary structure comprises 88 residues: Small ribosomal subunit protein bS18 (88 aa).

The segment at 1–22 (MSTKNAKPKKEAQRRPSRKAKV) is disordered.

The protein belongs to the bacterial ribosomal protein bS18 family. As to quaternary structure, part of the 30S ribosomal subunit. Forms a tight heterodimer with protein bS6.

Functionally, binds as a heterodimer with protein bS6 to the central domain of the 16S rRNA, where it helps stabilize the platform of the 30S subunit. This chain is Small ribosomal subunit protein bS18 (rpsR), found in Thermus thermophilus.